Here is a 463-residue protein sequence, read N- to C-terminus: Phosphoglucosamine mutase (463 aa).

Ser108 acts as the Phosphoserine intermediate in catalysis. Residues Ser108, Asp247, Asp249, and Asp251 each contribute to the Mg(2+) site. Phosphoserine is present on Ser108.

The protein belongs to the phosphohexose mutase family. The cofactor is Mg(2+). Activated by phosphorylation.

The catalysed reaction is alpha-D-glucosamine 1-phosphate = D-glucosamine 6-phosphate. Its function is as follows. Catalyzes the conversion of glucosamine-6-phosphate to glucosamine-1-phosphate. The protein is Phosphoglucosamine mutase of Nitrosospira multiformis (strain ATCC 25196 / NCIMB 11849 / C 71).